The following is a 532-amino-acid chain: Fatty-acid amide hydrolase 2-A (532 aa).

A helical transmembrane segment spans residues 9–29 (FLGRLLRAVVWILFAAFKLFA). Active-site charge relay system residues include Lys129 and Ser204. The Acyl-ester intermediate role is filled by Ser228.

It belongs to the amidase family.

The protein resides in the membrane. The enzyme catalyses N-(5Z,8Z,11Z,14Z-eicosatetraenoyl)-ethanolamine + H2O = ethanolamine + (5Z,8Z,11Z,14Z)-eicosatetraenoate. It catalyses the reaction (9Z)-octadecenamide + H2O = (9Z)-octadecenoate + NH4(+). The sequence is that of Fatty-acid amide hydrolase 2-A (faah2a) from Danio rerio (Zebrafish).